The chain runs to 332 residues: 4-hydroxy-3-methylbut-2-enyl diphosphate reductase (332 aa).

Residue C34 coordinates [4Fe-4S] cluster. 2 residues coordinate (2E)-4-hydroxy-3-methylbut-2-enyl diphosphate: H63 and H96. Residues H63 and H96 each coordinate dimethylallyl diphosphate. H63 and H96 together coordinate isopentenyl diphosphate. Residue C118 coordinates [4Fe-4S] cluster. Residue H146 participates in (2E)-4-hydroxy-3-methylbut-2-enyl diphosphate binding. H146 contacts dimethylallyl diphosphate. Isopentenyl diphosphate is bound at residue H146. The active-site Proton donor is E148. T186 contributes to the (2E)-4-hydroxy-3-methylbut-2-enyl diphosphate binding site. C216 contacts [4Fe-4S] cluster. (2E)-4-hydroxy-3-methylbut-2-enyl diphosphate is bound by residues S244, S245, N246, and S289. Residues S244, S245, N246, and S289 each contribute to the dimethylallyl diphosphate site. Residues S244, S245, N246, and S289 each contribute to the isopentenyl diphosphate site.

This sequence belongs to the IspH family. Requires [4Fe-4S] cluster as cofactor.

The enzyme catalyses isopentenyl diphosphate + 2 oxidized [2Fe-2S]-[ferredoxin] + H2O = (2E)-4-hydroxy-3-methylbut-2-enyl diphosphate + 2 reduced [2Fe-2S]-[ferredoxin] + 2 H(+). The catalysed reaction is dimethylallyl diphosphate + 2 oxidized [2Fe-2S]-[ferredoxin] + H2O = (2E)-4-hydroxy-3-methylbut-2-enyl diphosphate + 2 reduced [2Fe-2S]-[ferredoxin] + 2 H(+). It participates in isoprenoid biosynthesis; dimethylallyl diphosphate biosynthesis; dimethylallyl diphosphate from (2E)-4-hydroxy-3-methylbutenyl diphosphate: step 1/1. The protein operates within isoprenoid biosynthesis; isopentenyl diphosphate biosynthesis via DXP pathway; isopentenyl diphosphate from 1-deoxy-D-xylulose 5-phosphate: step 6/6. Catalyzes the conversion of 1-hydroxy-2-methyl-2-(E)-butenyl 4-diphosphate (HMBPP) into a mixture of isopentenyl diphosphate (IPP) and dimethylallyl diphosphate (DMAPP). Acts in the terminal step of the DOXP/MEP pathway for isoprenoid precursor biosynthesis. The protein is 4-hydroxy-3-methylbut-2-enyl diphosphate reductase of Mycobacterium ulcerans (strain Agy99).